A 392-amino-acid polypeptide reads, in one-letter code: ER-bound oxygenase mpaB (392 aa).

Over 1 to 21 (MSLPLPPALSELARALPYSRT) the chain is Lumenal. Residues 22-41 (QWLPIFVGFLIGYPILIRAL) traverse the membrane as a helical segment. Topologically, residues 42 to 392 (RYKRHGEMKK…WSKYHATTND (351 aa)) are cytoplasmic. Positions 352–376 (DLGQKKGPQGDPGNDEGIKDLKDGE) are disordered. Residues 367–376 (EGIKDLKDGE) show a composition bias toward basic and acidic residues.

This sequence belongs to the mpaB oxygenase family.

It is found in the endoplasmic reticulum membrane. The catalysed reaction is 4-farnesyl-3,5-dihydroxy-6-methylphthalide + AH2 + 2 O2 = (4E,8E)-10-(4,6-dihydroxy-7-methyl-3-oxo-1,3-dihydro-2-benzofuran-5-yl)-4,8-dimethyldeca-4,8-dienoate + acetone + A + H2O + H(+). It functions in the pathway secondary metabolite biosynthesis; terpenoid biosynthesis. ER-bound oxygenase; part of the gene cluster that mediates the biosynthesis of mycophenolic acid (MPA), the first isolated antibiotic natural product in the world obtained from a culture of Penicillium brevicompactum in 1893. MpaB catalyzes the oxidative cleavage the C19-C20 double bond in farnesyl-DHMP (FDHMP) to yield FDHMP-3C via a mycophenolic aldehyde intermediate. The first step of the pathway is the synthesis of 5-methylorsellinic acid (5MOA) by the cytosolic polyketide synthase mpaC. 5MOA is then converted to the phthalide compound 5,7-dihydroxy-4,6-dimethylphthalide (DHMP) by the endoplasmic reticulum-bound cytochrome P450 monooxygenase mpaDE. MpaDE first catalyzes hydroxylation of 5-MOA to 4,6-dihydroxy-2-(hydroxymethyl)-3-methylbenzoic acid (DHMB). MpaDE then acts as a lactone synthase that catalyzes the ring closure to convert DHMB into DHMP. The next step is the prenylation of DHMP by the Golgi apparatus-associated prenyltransferase mpaA to yield farnesyl-DHMP (FDHMP). The ER-bound oxygenase mpaB then mediates the oxidative cleavage the C19-C20 double bond in FDHMP to yield FDHMP-3C via a mycophenolic aldehyde intermediate. The O-methyltransferase mpaG catalyzes the methylation of FDHMP-3C to yield MFDHMP-3C. After the cytosolic methylation of FDHMP-3C, MFDHMP-3C enters into peroxisomes probably via free diffusion due to its low molecular weight. Upon a peroxisomal CoA ligation reaction, catalyzed by a beta-oxidation component enzyme acyl-CoA ligase ACL891, MFDHMP-3C-CoA would then be restricted to peroxisomes for the following beta-oxidation pathway steps. The peroxisomal beta-oxidation machinery than converts MFDHMP-3C-CoA into MPA_CoA, via a beta-oxidation chain-shortening process. Finally mpaH acts as a peroxisomal acyl-CoA hydrolase with high substrate specificity toward MPA-CoA to release the final product MPA. The polypeptide is ER-bound oxygenase mpaB (Penicillium brevicompactum).